Reading from the N-terminus, the 121-residue chain is Large ribosomal subunit protein uL18 (121 aa).

The interval 63 to 88 (AAIRPDPSPKKSQKQPPKTHKRYNLK) is disordered. Over residues 73-87 (KSQKQPPKTHKRYNL) the composition is skewed to basic residues.

Belongs to the universal ribosomal protein uL18 family. In terms of assembly, component of the large ribosomal subunit (LSU).

The protein localises to the cytoplasm. Its subcellular location is the nucleus. Functionally, component of the ribosome, a large ribonucleoprotein complex responsible for the synthesis of proteins in the cell. The small ribosomal subunit (SSU) binds messenger RNAs (mRNAs) and translates the encoded message by selecting cognate aminoacyl-transfer RNA (tRNA) molecules. The large subunit (LSU) contains the ribosomal catalytic site termed the peptidyl transferase center (PTC), which catalyzes the formation of peptide bonds, thereby polymerizing the amino acids delivered by tRNAs into a polypeptide chain. The nascent polypeptides leave the ribosome through a tunnel in the LSU and interact with protein factors that function in enzymatic processing, targeting, and the membrane insertion of nascent chains at the exit of the ribosomal tunnel. This is Large ribosomal subunit protein uL18 (RPL5) from Solanum melongena (Eggplant).